The sequence spans 202 residues: Nucleoside triphosphate pyrophosphatase (202 aa).

The active-site Proton acceptor is the D79.

Belongs to the Maf family. The cofactor is a divalent metal cation.

Its subcellular location is the cytoplasm. It catalyses the reaction a ribonucleoside 5'-triphosphate + H2O = a ribonucleoside 5'-phosphate + diphosphate + H(+). The enzyme catalyses a 2'-deoxyribonucleoside 5'-triphosphate + H2O = a 2'-deoxyribonucleoside 5'-phosphate + diphosphate + H(+). Nucleoside triphosphate pyrophosphatase. May have a dual role in cell division arrest and in preventing the incorporation of modified nucleotides into cellular nucleic acids. The chain is Nucleoside triphosphate pyrophosphatase from Rhodopseudomonas palustris (strain HaA2).